The following is a 177-amino-acid chain: uncharacterized protein (177 aa).

A disordered region spans residues 122 to 177; it reads LPFTRNGSGQQSNKLRDPKKGRTHKPKPSEKHKKNKTGKKGAQEKTHRSRSSRKGN. 2 stretches are compositionally biased toward basic residues: residues 142-160 and 168-177; these read GRTH…KTGK and HRSRSSRKGN.

This is an uncharacterized protein from Saccharomyces cerevisiae (strain ATCC 204508 / S288c) (Baker's yeast).